Reading from the N-terminus, the 96-residue chain is LSM complex subunit lsm2 (96 aa).

Positions 2–76 (LFYSFFKTLI…VRYVHMSSAY (75 aa)) constitute a Sm domain.

This sequence belongs to the snRNP Sm proteins family. In terms of assembly, component of the heptameric LSM1-LSM7 complex that forms a seven-membered ring structure with a donut shape. The LSm subunits are arranged in the order lsm1, lsm2, lsm3, lsm6, lsm5, lsm7 and lsm4. Component of the heptameric LSM2-LSM8 complex that forms a seven-membered ring structure with a donut shape. The LSm subunits are arranged in the order lsm8, lsm2, lsm3, lsm6, lsm5, lsm7 and lsm4.

The protein localises to the nucleus. It is found in the cytoplasm. Its function is as follows. Component of LSm protein complexes, which are involved in RNA processing and may function in a chaperone-like manner. Component of the cytoplasmic LSM1-LSM7 complex which is involved in mRNA degradation by activating the decapping step. The LSM1-LSM7 complex loads onto the 3'-end of single stranded RNA. Component of the nuclear LSM2-LSM8 complex, which is involved in spliceosome assembly. The LSM2-LSM8 complex plays a role in the biogenesis of the spliceosomal U4/U6-U5 tri-snRNP complex by accelerating prp24-mediated annealing of U4/U6 di-snRNA. The LSM2-LSM8 complex binds U6 snRNA terminating with a cyclic 2',3' phosphate group; RNA with an unmodified 3' hydroxyl or non-cyclic 3' phosphate is bound less tightly. This is LSM complex subunit lsm2 (lsm2) from Schizosaccharomyces pombe (strain 972 / ATCC 24843) (Fission yeast).